Reading from the N-terminus, the 282-residue chain is MEMO1 family protein Msm_1438 (282 aa).

This sequence belongs to the MEMO1 family.

The polypeptide is MEMO1 family protein Msm_1438 (Methanobrevibacter smithii (strain ATCC 35061 / DSM 861 / OCM 144 / PS)).